The primary structure comprises 252 residues: ATP synthase subunit a (252 aa).

Helical transmembrane passes span G33 to A53, V92 to V112, D130 to L150, L196 to L216, and G217 to G237.

Belongs to the ATPase A chain family. In terms of assembly, F-type ATPases have 2 components, CF(1) - the catalytic core - and CF(0) - the membrane proton channel. CF(1) has five subunits: alpha(3), beta(3), gamma(1), delta(1), epsilon(1). CF(0) has four main subunits: a, b, b' and c.

It localises to the cellular thylakoid membrane. Key component of the proton channel; it plays a direct role in the translocation of protons across the membrane. The polypeptide is ATP synthase subunit a (Thermosynechococcus vestitus (strain NIES-2133 / IAM M-273 / BP-1)).